The primary structure comprises 189 residues: Molybdopterin synthase catalytic subunit (189 aa).

Serine 20 bears the Phosphoserine mark. Residues 143–144, lysine 159, and 166–168 contribute to the substrate site; these read HR and KKE.

It belongs to the MoaE family. MOCS2B subfamily. As to quaternary structure, heterotetramer; composed of 2 small (MOCS2A) and 2 large (MOCS2B) subunits.

It is found in the cytoplasm. The protein localises to the cytosol. The catalysed reaction is 2 [molybdopterin-synthase sulfur-carrier protein]-C-terminal-Gly-aminoethanethioate + cyclic pyranopterin phosphate + H2O = molybdopterin + 2 [molybdopterin-synthase sulfur-carrier protein]-C-terminal Gly-Gly + 2 H(+). Its pathway is cofactor biosynthesis; molybdopterin biosynthesis. Functionally, catalytic subunit of the molybdopterin synthase complex, a complex that catalyzes the conversion of precursor Z into molybdopterin. Acts by mediating the incorporation of 2 sulfur atoms from thiocarboxylated MOCS2A into precursor Z to generate a dithiolene group. In Bos taurus (Bovine), this protein is Molybdopterin synthase catalytic subunit.